The primary structure comprises 77 residues: Sec-independent protein translocase protein TatA (77 aa).

A helical membrane pass occupies residues 1–21 (MGGLSIWHWLIVLLIVALVFG). A disordered region spans residues 43–77 (MKESEAPADAQQLPRSGSVNVDAKDAARSSDSNKA). Basic and acidic residues predominate over residues 64 to 77 (DAKDAARSSDSNKA).

Belongs to the TatA/E family. In terms of assembly, the Tat system comprises two distinct complexes: a TatABC complex, containing multiple copies of TatA, TatB and TatC subunits, and a separate TatA complex, containing only TatA subunits. Substrates initially bind to the TatABC complex, which probably triggers association of the separate TatA complex to form the active translocon.

It is found in the cell inner membrane. Functionally, part of the twin-arginine translocation (Tat) system that transports large folded proteins containing a characteristic twin-arginine motif in their signal peptide across membranes. TatA could form the protein-conducting channel of the Tat system. The chain is Sec-independent protein translocase protein TatA from Burkholderia mallei (strain NCTC 10247).